The primary structure comprises 174 residues: Gamma-crystallin D (174 aa).

Beta/gamma crystallin 'Greek key' domains lie at 2–40 (GKIT…RVDS) and 41–83 (GCWM…RLIP). The connecting peptide stretch occupies residues 84 to 87 (HAGS). 2 Beta/gamma crystallin 'Greek key' domains span residues 88-128 (HRLR…NVLE) and 129-171 (GSWV…RRVI).

It belongs to the beta/gamma-crystallin family.

Crystallins are the dominant structural components of the vertebrate eye lens. The protein is Gamma-crystallin D (CRYGD) of Bos taurus (Bovine).